Reading from the N-terminus, the 459-residue chain is Vitronectin (459 aa).

A signal peptide spans 1–19 (MAPLRPLLMLALLAWVALA). Residues 20–63 (DQESCKGRCTDGFIAERKCQCDELCSYYQSCCTDYVAECKPQVT) form the SMB domain. 7 disulfide bridges follow: Cys24–Cys28, Cys24–Cys40, Cys28–Cys58, Cys38–Cys40, Cys38–Cys51, Cys44–Cys50, and Cys51–Cys58. Positions 64–66 (RGD) match the Cell attachment site motif. Sulfotyrosine occurs at positions 75, 78, and 80. Asn87 and Asn146 each carry an N-linked (GlcNAc...) asparagine glycan. 3 Hemopexin repeats span residues 135 to 179 (GKPF…VWGI), 180 to 227 (KGPI…FKGI), and 228 to 285 (PDDV…FALM). 2 positions are modified to phosphoserine: Ser289 and Ser378. Positions 338–380 (LKPSQPKMTKSARRSGKRYRSRRGRGRGRGHSRSQKSHRQSRS) are disordered. Residues 347-378 (KSARRSGKRYRSRRGRGRGRGHSRSQKSHRQS) are compositionally biased toward basic residues. Sulfotyrosine occurs at positions 398 and 401. One copy of the Hemopexin 4 repeat lies at 400–453 (DYKMDWLVPATCEPIQSVYFFSGEEYYRVNLRTQRVDTVTPPYPRSIAQYWLGC).

Monomer. Interacts with SERPINE1/PAI1 and C1QBP. Post-translationally, sulfated on tyrosine residues. In terms of processing, N- and O-glycosylated. It has been suggested that the active SMB domain may be permitted considerable disulfide bond heterogeneity or variability, thus two alternate disulfide patterns based on 3D structures are described with 1 disulfide bond conserved in both. Plasma.

The protein localises to the secreted. The protein resides in the extracellular space. Functionally, vitronectin is a cell adhesion and spreading factor found in serum and tissues. Vitronectin interact with glycosaminoglycans and proteoglycans. Is recognized by certain members of the integrin family and serves as a cell-to-substrate adhesion molecule. Inhibitor of the membrane-damaging effect of the terminal cytolytic complement pathway. This is Vitronectin (VTN) from Sus scrofa (Pig).